The following is a 607-amino-acid chain: UvrABC system protein C (607 aa).

In terms of domain architecture, GIY-YIG spans 16–94 (GRPGVYRMFD…IKEWRPPYNI (79 aa)). Positions 203–238 (HALTNELSTAMEEAAINLEFERAAELRDQIALLRRV) constitute a UVR domain.

This sequence belongs to the UvrC family. In terms of assembly, interacts with UvrB in an incision complex.

Its subcellular location is the cytoplasm. Functionally, the UvrABC repair system catalyzes the recognition and processing of DNA lesions. UvrC both incises the 5' and 3' sides of the lesion. The N-terminal half is responsible for the 3' incision and the C-terminal half is responsible for the 5' incision. This is UvrABC system protein C from Pseudomonas fluorescens (strain Pf0-1).